Reading from the N-terminus, the 468-residue chain is Transmembrane protein 151B (468 aa).

The tract at residues 1-25 (MPEDGGGDSGDVPEIIPDGEPLREE) is disordered. The next 2 membrane-spanning stretches (helical) occupy residues 45–65 (CLLL…CRLA) and 98–118 (YLYI…AECW). A disordered region spans residues 384–438 (VSSNSLPPARPSGPRLPFSRSRLSLGAGGRATPGVFRSLSGGPLGRRGEDTEPLE).

This sequence belongs to the TMEM151 family.

It localises to the membrane. In Bos taurus (Bovine), this protein is Transmembrane protein 151B (TMEM151B).